A 261-amino-acid chain; its full sequence is tRNA pseudouridine synthase A (261 aa).

Asp51 serves as the catalytic Nucleophile. Position 109 (Tyr109) interacts with substrate.

It belongs to the tRNA pseudouridine synthase TruA family. As to quaternary structure, homodimer.

The enzyme catalyses uridine(38/39/40) in tRNA = pseudouridine(38/39/40) in tRNA. Its function is as follows. Formation of pseudouridine at positions 38, 39 and 40 in the anticodon stem and loop of transfer RNAs. In Shewanella baltica (strain OS185), this protein is tRNA pseudouridine synthase A.